Reading from the N-terminus, the 233-residue chain is Histone H1-I (233 aa).

2 disordered regions span residues 1–55 and 115–233; these read MSDS…HPPV and TGAS…KKSK. The span at 17–29 shows a compositional bias: low complexity; it reads KAASPAKSPAKSP. One can recognise an H15 domain in the interval 51-125; that stretch reads THPPVSEMVV…GASGSFKMPP (75 aa). Basic and acidic residues-rich tracts occupy residues 128–137 and 146–155; these read KKVDRPESAP and TRVERKEKKV. 2 stretches are compositionally biased toward basic residues: residues 172 to 213 and 223 to 233; these read AAKK…KPTP and AAARKPAKKSK.

It belongs to the histone H1/H5 family.

It is found in the nucleus. Its subcellular location is the chromosome. Histones H1 are necessary for the condensation of nucleosome chains into higher-order structures. The polypeptide is Histone H1-I (Glyptotendipes barbipes (Midge)).